The primary structure comprises 156 residues: Small ribosomal subunit protein uS7 (156 aa).

Belongs to the universal ribosomal protein uS7 family. Part of the 30S ribosomal subunit. Contacts proteins S9 and S11.

One of the primary rRNA binding proteins, it binds directly to 16S rRNA where it nucleates assembly of the head domain of the 30S subunit. Is located at the subunit interface close to the decoding center, probably blocks exit of the E-site tRNA. The chain is Small ribosomal subunit protein uS7 from Pseudomonas fluorescens (strain ATCC BAA-477 / NRRL B-23932 / Pf-5).